The sequence spans 350 residues: MTISPQPSHQQFESYQWTTESRSSQQRHGTGTPSQDGRLSAIPDPVERHVARWRSESRNSNKDKVFRNDEEFSQQDEIVNGTLTALKNDVEQTTEIIRRKQEQMRMERRQFQTEMEVNGRISIDPTDDWLAARLKAVSSDDMNQQLVKLKQDQRQNAVTDTLAALVYDVNATTEVLRRGQRGRDGEDGNKKKKEEIEYTLRLTPAPEEQIPQRPKIPEDDNMETDDYSRQYGVQMSEETDSLRRRRARSTTPRRTLHISGSPPPPAAAVCAYCSEEIDGAILTALAPNSERAQKFHTYHFMCTYCQKALNMHGTYREHDLKPYCHDCFYKLYNGLQYAPDDHQASIEKLI.

Residues 1 to 37 are compositionally biased toward polar residues; the sequence is MTISPQPSHQQFESYQWTTESRSSQQRHGTGTPSQDG. Residues 1–65 form a disordered region; it reads MTISPQPSHQ…ESRNSNKDKV (65 aa). The segment covering 45–65 has biased composition (basic and acidic residues); sequence PVERHVARWRSESRNSNKDKV. Residues 83-110 are a coiled coil; sequence LTALKNDVEQTTEIIRRKQEQMRMERRQ. 3 disordered regions span residues 177-198, 206-225, and 235-262; these read RRGQ…EIEY, PEEQ…METD, and MSEE…SGSP. The 67-residue stretch at 268-334 folds into the LIM zinc-binding domain; it reads AVCAYCSEEI…HDCFYKLYNG (67 aa).

In terms of processing, ubiquitinated. Ubiquitination by rnf-5 leads to dissociation from muscle dense bodies during molting and is required for ecdysis. Expressed in the body wall muscles, vulval muscles and the anal muscles. Expressed in the muscle arms of the head muscle cells that form neuromuscular junctions and in the anal depressor muscle.

The protein localises to the cytoplasm. The protein resides in the nucleus. It localises to the cell membrane. Its subcellular location is the myofibril. It is found in the sarcomere. The protein localises to the m line. The protein resides in the cell junction. It localises to the focal adhesion. Functionally, required for the assembly and integrity of muscle dense bodies, which establish the adhesion sites of the muscle cells to the extracellular matrix. Decreased localization of unc-95 to dense bodies and their subsequent dissociation plays an important role in ecdysis during molting. Involved in the organization of the muscle sarcomeric structure and thereby required for locomotion. The chain is LIM domain-containing protein unc-95 from Caenorhabditis elegans.